The chain runs to 87 residues: Translation initiation factor IF-1 (87 aa).

The region spanning 16 to 87 is the S1-like domain; that stretch reads LSKEDVIEME…TKGRISYRHK (72 aa).

Belongs to the IF-1 family. In terms of assembly, component of the 30S ribosomal translation pre-initiation complex which assembles on the 30S ribosome in the order IF-2 and IF-3, IF-1 and N-formylmethionyl-tRNA(fMet); mRNA recruitment can occur at any time during PIC assembly.

The protein localises to the cytoplasm. Functionally, one of the essential components for the initiation of protein synthesis. Stabilizes the binding of IF-2 and IF-3 on the 30S subunit to which N-formylmethionyl-tRNA(fMet) subsequently binds. Helps modulate mRNA selection, yielding the 30S pre-initiation complex (PIC). Upon addition of the 50S ribosomal subunit IF-1, IF-2 and IF-3 are released leaving the mature 70S translation initiation complex. The sequence is that of Translation initiation factor IF-1 from Magnetococcus marinus (strain ATCC BAA-1437 / JCM 17883 / MC-1).